The primary structure comprises 107 residues: MKVHKGDTVLVVSGKDKGAKGKVLQAYPERNRVLVEGVNRIKKHTAISTNQRGAKSGGIVTQEAPIHVSNVMVVDSDGKPTRIGYRVDEETGKRVRISKRNGKDIQA.

This sequence belongs to the universal ribosomal protein uL24 family. Part of the 50S ribosomal subunit.

One of two assembly initiator proteins, it binds directly to the 5'-end of the 23S rRNA, where it nucleates assembly of the 50S subunit. Functionally, one of the proteins that surrounds the polypeptide exit tunnel on the outside of the subunit. This chain is Large ribosomal subunit protein uL24, found in Mycobacterium ulcerans (strain Agy99).